A 135-amino-acid chain; its full sequence is DNA-binding protein inhibitor ID-2-B (135 aa).

In terms of domain architecture, bHLH spans 23–75 (ARSKAPVDEPMSLLYNMNDCYSKLKELVPSIPPNKKVSKMEILQHVIDYILDL). The Nuclear export signal motif lies at 108 to 117 (LNTDISILSL).

As to quaternary structure, heterodimer with other HLH proteins.

The protein localises to the cytoplasm. It is found in the nucleus. Its function is as follows. Transcriptional regulator (lacking a basic DNA binding domain) which negatively regulates the basic helix-loop-helix (bHLH) transcription factors by forming heterodimers and inhibiting their DNA binding and transcriptional activity. Inhibits the activity of both neurogenic (neurod1/neuroD) and myogenic (myod1/myoD) bHLH factors. May play a role in the regulation of the circadian clock. This Xenopus laevis (African clawed frog) protein is DNA-binding protein inhibitor ID-2-B (id2-b).